A 2108-amino-acid polypeptide reads, in one-letter code: Mycocerosic acid synthase-like polyketide synthase (2108 aa).

A signal peptide spans 1–23; it reads MGKERTKTVDRTRVTPVAVIGMG. A lipid anchor (N-palmitoyl cysteine) is attached at Cys-24. Cys-24 carries the S-diacylglycerol cysteine lipid modification. A Ketosynthase family 3 (KS3) domain is found at 24–436; sequence CRLPGGIDSP…GTNVHAIVEQ (413 aa). Cys-185 functions as the Acyl-thioester intermediate; for beta-ketoacyl synthase activity in the catalytic mechanism. Residues His-320 and His-356 each act as for beta-ketoacyl synthase activity in the active site. The segment at 438-542 is linker domain (LD); it reads PVPAPESGAP…PYPPAVGQDD (105 aa). The interval 543-842 is acyltransferase (AT); it reads RGPVWVFSGQ…AAALAGMRRE (300 aa). Ser-634 (acyl-ester intermediate; for acyltransferase activity) is an active-site residue. Residues 900 to 1184 are dehydratase (DH); it reads NTVAVHPLLG…LAVRGLQLGT (285 aa). The N-terminal hotdog fold stretch occupies residues 905-1025; sequence HPLLGSHVRL…AVLHVVREAD (121 aa). A PKS/mFAS DH domain is found at 905–1191; the sequence is HPLLGSHVRL…LGTGASQASE (287 aa). The active-site Proton acceptor; for dehydratase activity is His-938. A C-terminal hotdog fold region spans residues 1044–1191; the sequence is PHKVDGAEVR…LGTGASQASE (148 aa). The Proton donor; for dehydratase activity role is filled by Asp-1108. The pseudo beta-ketoacyl reductase (PsiKR) stretch occupies residues 1220–1391; that stretch reads AWLLISTCDA…SGEDETAWRN (172 aa). An enoylreductase (ER) region spans residues 1419-1743; sequence AGMRLQIRTP…EHTGKLILDV (325 aa). Positions 1765–2004 are beta-ketoacyl reductase (KR); that stretch reads GSYIITGGLG…HSPFAEKFQS (240 aa). Residues 1773–1776, 1796–1799, 1824–1825, and 1897–1898 each bind NADP(+); these read LGGL, SRSQ, DI, and FS. One can recognise a Carrier domain in the interval 2025–2101; sequence EEWPDRLRRL…DLMCDKLAAD (77 aa). Residue Ser-2060 is modified to O-(pantetheine 4'-phosphoryl)serine.

As to quaternary structure, homodimer.

It is found in the cell membrane. Its pathway is lipid metabolism; fatty acid biosynthesis. Polyketide synthase likely involved in the biosynthesis of a polymethyl-branched fatty acid (PMB-FA) that might only be produced during host infection. Is required for the full virulence of M.tuberculosis during host infection. The sequence is that of Mycocerosic acid synthase-like polyketide synthase from Mycobacterium tuberculosis (strain ATCC 25618 / H37Rv).